Reading from the N-terminus, the 116-residue chain is Immunoglobulin heavy variable 3-13 (116 aa).

Positions 1-19 (MELGLSWVFLVAILEGVQC) are cleaved as a signal peptide. Residues 20–44 (EVQLVESGGGLVQPGGSLRLSCAAS) form a framework-1 region. The Ig-like domain maps to 20 to 116 (EVQLVESGGG…GDTAVYYCAR (97 aa)). A disulfide bridge links Cys41 with Cys114. Residues 45-52 (GFTFSSYD) are complementarity-determining-1. The interval 53–69 (MHWVRQATGKGLEWVSA) is framework-2. Positions 70 to 76 (IGTAGDP) are complementarity-determining-2. The framework-3 stretch occupies residues 77–114 (YYPGSVKGRFTISRENAKNSLYLQMNSLRAGDTAVYYC). A complementarity-determining-3 region spans residues 115-116 (AR).

Immunoglobulins are composed of two identical heavy chains and two identical light chains; disulfide-linked.

Its subcellular location is the secreted. It localises to the cell membrane. V region of the variable domain of immunoglobulin heavy chains that participates in the antigen recognition. Immunoglobulins, also known as antibodies, are membrane-bound or secreted glycoproteins produced by B lymphocytes. In the recognition phase of humoral immunity, the membrane-bound immunoglobulins serve as receptors which, upon binding of a specific antigen, trigger the clonal expansion and differentiation of B lymphocytes into immunoglobulins-secreting plasma cells. Secreted immunoglobulins mediate the effector phase of humoral immunity, which results in the elimination of bound antigens. The antigen binding site is formed by the variable domain of one heavy chain, together with that of its associated light chain. Thus, each immunoglobulin has two antigen binding sites with remarkable affinity for a particular antigen. The variable domains are assembled by a process called V-(D)-J rearrangement and can then be subjected to somatic hypermutations which, after exposure to antigen and selection, allow affinity maturation for a particular antigen. The protein is Immunoglobulin heavy variable 3-13 of Homo sapiens (Human).